A 156-amino-acid chain; its full sequence is Small ribosomal subunit protein uS7 (156 aa).

This sequence belongs to the universal ribosomal protein uS7 family. Part of the 30S ribosomal subunit. Contacts proteins S9 and S11.

In terms of biological role, one of the primary rRNA binding proteins, it binds directly to 16S rRNA where it nucleates assembly of the head domain of the 30S subunit. Is located at the subunit interface close to the decoding center, probably blocks exit of the E-site tRNA. This Parvibaculum lavamentivorans (strain DS-1 / DSM 13023 / NCIMB 13966) protein is Small ribosomal subunit protein uS7.